The chain runs to 159 residues: Large ribosomal subunit protein bL35c (159 aa).

Residues 1 to 86 constitute a chloroplast transit peptide; sequence MAMASATATL…TSSPSFTVFA (86 aa).

In terms of assembly, component of the chloroplast large ribosomal subunit (LSU). Mature 70S chloroplast ribosomes of higher plants consist of a small (30S) and a large (50S) subunit. The 30S small subunit contains 1 molecule of ribosomal RNA (16S rRNA) and 24 different proteins. The 50S large subunit contains 3 rRNA molecules (23S, 5S and 4.5S rRNA) and 33 different proteins.

The protein resides in the plastid. The protein localises to the chloroplast. In terms of biological role, component of the chloroplast ribosome (chloro-ribosome), a dedicated translation machinery responsible for the synthesis of chloroplast genome-encoded proteins, including proteins of the transcription and translation machinery and components of the photosynthetic apparatus. This chain is Large ribosomal subunit protein bL35c (RPL35), found in Spinacia oleracea (Spinach).